A 1379-amino-acid chain; its full sequence is ATPase histone chaperone YTA7 (1379 aa).

2 disordered regions span residues 1-39 (MARN…TTTR) and 54-243 (DFLE…NSRN). Alanine 2 is modified (N-acetylalanine). 2 positions are modified to phosphoserine: serine 11 and serine 17. A compositionally biased stretch (basic and acidic residues) spans 61–78 (VMDKDETPVDVTSDEHHN). Serine 94 is subject to Phosphoserine. Residues 97–110 (ENARTNEELTNERN) show a composition bias toward basic and acidic residues. Composition is skewed to acidic residues over residues 119-152 (PEED…DEDS) and 170-184 (DPDD…DEEG). A compositionally biased stretch (basic residues) spans 192–207 (SSKRLKRANSRRTRSS). The residue at position 212 (threonine 212) is a Phosphothreonine. Residues 218–228 (RALRSRTRHSR) show a composition bias toward basic residues. Phosphothreonine is present on threonine 229. Serine 241, serine 259, and serine 285 each carry phosphoserine. Residues 302 to 330 (NPSPARRGRGGWNASQNSGPTRRLFPTGG) are disordered. Residues serine 367, serine 369, and serine 370 each carry the phosphoserine modification. Residues 375–396 (LPLGVTPKTKKENTQKKKKKKP) are disordered. Residues 450-578 (VLFHGPPGTG…PALRRPGRFD (129 aa)) are AAA-ATPase; required for its chromatin boundary function. 454–461 (GPPGTGKT) is an ATP binding site. Serine 735 is modified (phosphoserine). One can recognise a Bromo domain in the interval 974-1101 (RLKNVLKIKL…ANAQMGIEEI (128 aa)). Serine 1142 is subject to Phosphoserine. Disordered stretches follow at residues 1233-1274 (TCTS…ANTN) and 1291-1316 (LHET…GKKS). Residues 1244–1254 (ERARKEPKENE) are compositionally biased toward basic and acidic residues. A Phosphoserine modification is found at serine 1256. The segment covering 1256-1274 (SLQTQVTEENFSKIDANTN) has biased composition (polar residues). Residues 1293-1316 (ETVEKRERSPIPKEVVEPEQGKKS) show a composition bias toward basic and acidic residues.

This sequence belongs to the AAA ATPase family. In terms of assembly, interacts with CSE4/CENP-A. Interacts with SCM3. Interacts with SPT16. Interacts with POB3. Interacts with the casein kinase II complex subunits CKA1, CKA2, CKB1 and CKB2. Interacts with RNA polymerase II. Interacts (via Bromo domain) with histone H3. Interacts (via Bromo domain) with histone H4. In terms of processing, phosphorylated by CDK1 and casein kinase II during S-phase, which leads to its eviction from histone gene promoters and promotes histone gene transcription.

Its subcellular location is the chromosome. The protein localises to the centromere. It is found in the nucleus. Functionally, functions as an ATP-dependent nucleosome disassembly factor that helps evict canonical histone H3 from the 5'-end of genes upon their induction. Also contributes to kinetochore assembly by cooperating with SCM3 to load the histone H3 variant CSE4/CENP-A at centromeres. Provides a chromatin boundary function at the 5'-end of genes that restricts access by RTT106 and thus prevents ectopic spreading of repressive chromatin into coding regions. Also prevents heterochromatin spreading downstream of the silent mating-type locus HMR, this function is independent of the tRNA boundary element. Contributes to appropriate cell cycle regulation of histone gene expression by recruiting RNA polymerase II to histone genes, and subsequent CDK1- and casein kinase II-dependent eviction from chromatin is required to promote transcriptional elongation. The sequence is that of ATPase histone chaperone YTA7 from Saccharomyces cerevisiae (strain ATCC 204508 / S288c) (Baker's yeast).